A 336-amino-acid polypeptide reads, in one-letter code: Formimidoylglutamase (336 aa).

Residues His129, Asp160, His162, Asp164, Asp257, and Asp259 each coordinate Mn(2+).

The protein belongs to the arginase family. It depends on Mn(2+) as a cofactor.

The catalysed reaction is N-formimidoyl-L-glutamate + H2O = formamide + L-glutamate. The protein operates within amino-acid degradation; L-histidine degradation into L-glutamate; L-glutamate from N-formimidoyl-L-glutamate (hydrolase route): step 1/1. In terms of biological role, catalyzes the conversion of N-formimidoyl-L-glutamate to L-glutamate and formamide. In Vibrio vulnificus (strain CMCP6), this protein is Formimidoylglutamase.